A 111-amino-acid chain; its full sequence is MWSKIEENQTVEMTVNLRRICSRLPWTKKASKVVRMLKREIQKHFREEIGVVVTNDLNNFLYSRGIKKIPNKVRVRVTKETSLKNAEENVLKTDLVVVGSFKNLKEVIVDQ.

The protein belongs to the eukaryotic ribosomal protein eL31 family.

This chain is Large ribosomal subunit protein eL31 (RPL31), found in Encephalitozoon cuniculi (strain GB-M1) (Microsporidian parasite).